Reading from the N-terminus, the 558-residue chain is Formate--tetrahydrofolate ligase (558 aa).

67–74 (TPAGEGKT) is a binding site for ATP.

It belongs to the formate--tetrahydrofolate ligase family.

It carries out the reaction (6S)-5,6,7,8-tetrahydrofolate + formate + ATP = (6R)-10-formyltetrahydrofolate + ADP + phosphate. Its pathway is one-carbon metabolism; tetrahydrofolate interconversion. The protein is Formate--tetrahydrofolate ligase of Sphingobium sp. (strain NBRC 103272 / SYK-6).